Reading from the N-terminus, the 1573-residue chain is Pentafunctional AROM polypeptide (1573 aa).

Residues 1-384 (MSNESNIITV…YEKHATVVSD (384 aa)) form a 3-dehydroquinate synthase region. Residues 46 to 48 (DSN), 83 to 86 (ESSK), 114 to 116 (GGV), and D119 each bind NAD(+). 7-phospho-2-dehydro-3-deoxy-D-arabino-heptonate is bound at residue R130. An NAD(+)-binding site is contributed by 139–140 (TT). Residues D146 and K152 each coordinate 7-phospho-2-dehydro-3-deoxy-D-arabino-heptonate. K161 is an NAD(+) binding site. Residue N162 participates in 7-phospho-2-dehydro-3-deoxy-D-arabino-heptonate binding. NAD(+)-binding positions include 179–182 (FLHT) and N190. Residue E194 participates in Zn(2+) binding. 7-phospho-2-dehydro-3-deoxy-D-arabino-heptonate-binding positions include 194–197 (EIIK) and K250. E260 serves as the catalytic Proton acceptor; for 3-dehydroquinate synthase activity. Residues 264–268 (RNLLN) and H271 contribute to the 7-phospho-2-dehydro-3-deoxy-D-arabino-heptonate site. H271 is a Zn(2+) binding site. Residue H275 is the Proton acceptor; for 3-dehydroquinate synthase activity of the active site. Residues H287 and K356 each contribute to the 7-phospho-2-dehydro-3-deoxy-D-arabino-heptonate site. H287 is a Zn(2+) binding site. Residues 397-843 (VDEFTKSSWD…WDVLHQSFGV (447 aa)) form an EPSP synthase region. C825 functions as the For EPSP synthase activity in the catalytic mechanism. Positions 863-1058 (NASIILIGMR…KTKKRSTFLT (196 aa)) are shikimate kinase. 870-877 (GMRGAGKT) provides a ligand contact to ATP. A 3-dehydroquinase region spans residues 1059 to 1280 (LNYPRIEDAL…AAPGQLTVKQ (222 aa)). The active-site Proton acceptor; for 3-dehydroquinate dehydratase activity is the H1182. Catalysis depends on K1211, which acts as the Schiff-base intermediate with substrate; for 3-dehydroquinate dehydratase activity. Residues 1293 to 1573 (PEKFFLFGKP…FDAVYQKVIE (281 aa)) form a shikimate dehydrogenase region.

It in the N-terminal section; belongs to the sugar phosphate cyclases superfamily. Dehydroquinate synthase family. This sequence in the 2nd section; belongs to the EPSP synthase family. The protein in the 3rd section; belongs to the shikimate kinase family. In the 4th section; belongs to the type-I 3-dehydroquinase family. It in the C-terminal section; belongs to the shikimate dehydrogenase family. As to quaternary structure, homodimer. Zn(2+) serves as cofactor.

The protein resides in the cytoplasm. It carries out the reaction 7-phospho-2-dehydro-3-deoxy-D-arabino-heptonate = 3-dehydroquinate + phosphate. The catalysed reaction is 3-dehydroquinate = 3-dehydroshikimate + H2O. The enzyme catalyses shikimate + NADP(+) = 3-dehydroshikimate + NADPH + H(+). It catalyses the reaction shikimate + ATP = 3-phosphoshikimate + ADP + H(+). It carries out the reaction 3-phosphoshikimate + phosphoenolpyruvate = 5-O-(1-carboxyvinyl)-3-phosphoshikimate + phosphate. It functions in the pathway metabolic intermediate biosynthesis; chorismate biosynthesis; chorismate from D-erythrose 4-phosphate and phosphoenolpyruvate: step 2/7. It participates in metabolic intermediate biosynthesis; chorismate biosynthesis; chorismate from D-erythrose 4-phosphate and phosphoenolpyruvate: step 3/7. The protein operates within metabolic intermediate biosynthesis; chorismate biosynthesis; chorismate from D-erythrose 4-phosphate and phosphoenolpyruvate: step 4/7. Its pathway is metabolic intermediate biosynthesis; chorismate biosynthesis; chorismate from D-erythrose 4-phosphate and phosphoenolpyruvate: step 5/7. It functions in the pathway metabolic intermediate biosynthesis; chorismate biosynthesis; chorismate from D-erythrose 4-phosphate and phosphoenolpyruvate: step 6/7. The AROM polypeptide catalyzes 5 consecutive enzymatic reactions in prechorismate polyaromatic amino acid biosynthesis. The sequence is that of Pentafunctional AROM polypeptide from Schizosaccharomyces pombe (strain 972 / ATCC 24843) (Fission yeast).